A 1837-amino-acid chain; its full sequence is AF4/FMR2 family member lilli (1837 aa).

Disordered regions lie at residues 1-25 (MAQQQQQQQHHHHLQHQQQQQQQQQ), 65-109 (NLYS…PRRL), 162-295 (IQQQ…LHNG), 455-592 (QQLP…KKKY), 605-712 (TGLL…PGNV), 797-852 (PKSQ…LQIP), 868-1250 (NNMQ…GGAK), 1267-1311 (QQQQ…GLAS), and 1344-1466 (APSS…DPML). The segment covering 16–25 (HQQQQQQQQQ) has biased composition (low complexity). Positions 84–109 (REKYERQQGIQSDDRETSLFSEPRRL) are enriched in basic and acidic residues. Low complexity-rich tracts occupy residues 162 to 179 (IQQQVSSSISSSASVASS), 187 to 200 (QTQQQQQQQQQQQQ), and 247 to 264 (NSNSSSITNNAAASSSSS). Threonine 468 carries the post-translational modification Phosphothreonine. A compositionally biased stretch (basic and acidic residues) spans 475-488 (LKIEKNPILEKQDS). A compositionally biased stretch (acidic residues) spans 490–500 (LENDLELSESE). Residues serine 497 and serine 499 each carry the phosphoserine modification. 2 stretches are compositionally biased toward low complexity: residues 509–529 (SPGSSSNGSESDSTESGSESS) and 542–552 (QQQQQTQQQQL). Basic residues predominate over residues 553 to 563 (HGHHPQSHHHQ). A compositionally biased stretch (low complexity) spans 564 to 583 (QFLQQQLQRQQQQQQQQQQL). Composition is skewed to gly residues over residues 612–633 (GGLGSSSGNNSSGGGGGSGNGG) and 641–673 (GSMGGSGGSSSSGGASGGGGGGGGSGSSSGIGS). 2 stretches are compositionally biased toward polar residues: residues 678 to 690 (NKTPSPTDSNKWN) and 698 to 711 (PTSQTSSESVSPGN). Positions 815 to 837 (SESATSGSSSSSCSSSDSAASAS) are enriched in low complexity. The span at 868–880 (NNMQKSQSMSVTV) shows a compositional bias: polar residues. Residues 892–902 (PRQKKPRKKKM) are compositionally biased toward basic residues. Residues serine 913 and serine 914 each carry the phosphoserine modification. Low complexity-rich tracts occupy residues 927-951 (VVAQAQAAVVPPPSTNSTTTSATTT) and 961-1013 (QQQQ…SSVL). Positions 952–964 (KKGRGRPRKQQQQ) form a DNA-binding region, a.T hook. Phosphoserine occurs at positions 974 and 976. A compositionally biased stretch (polar residues) spans 1021 to 1033 (SQSSSNGNTPTKK). 4 stretches are compositionally biased toward low complexity: residues 1034 to 1049 (MSSIPMMPAAAASAAA), 1056 to 1091 (AVAAANAVAASSSSSDEESSSSSCSTSKSSSSSSSS), 1130 to 1139 (GSSSPTSSSS), and 1157 to 1173 (ISNSNSNSNNNVIVNNN). Residues 1174–1184 (LQQQAMPQQSP) show a composition bias toward polar residues. Low complexity predominate over residues 1189 to 1212 (LSGGSQQLSSSDSSSSSSGSSSSS). The span at 1217–1234 (DAKREKNRERKPKSDKNK) shows a compositional bias: basic and acidic residues. Residues 1267 to 1276 (QQQQQQQQVQ) show a composition bias toward low complexity. Polar residues predominate over residues 1345-1355 (PSSSNQQNGHL). Residues 1373–1386 (KVKHEHHQLHHHSQ) are compositionally biased toward basic residues. 2 stretches are compositionally biased toward basic and acidic residues: residues 1393–1407 (VKPEPELDSLYETKF) and 1416–1432 (FQLKQERDRDRNRERDQ). The residue at position 1517 (serine 1517) is a Phosphoserine. Positions 1550–1560 (AVQTTPPTSVT) are enriched in polar residues. 2 disordered regions span residues 1550-1571 (AVQTTPPTSVTGAGAPASLVSQ) and 1727-1756 (GNTPSSISPSNSVGSQGSGSNTPPGKIVPQ). Low complexity predominate over residues 1727–1747 (GNTPSSISPSNSVGSQGSGSN).

This sequence belongs to the AF4 family.

The protein resides in the nucleus. Functionally, has a role in transcriptional regulation. Acts in parallel with the Ras/MAPK and the PI3K/PKB pathways in the control of cell identity and cellular growth. Essential for regulation of the cytoskeleton and cell growth but not for cell proliferation or growth rate. Required specifically for the microtubule-based basal transport of lipid droplets. Plays a partially redundant function downstream of Raf in cell fate specification in the developing eye. Pair-rule protein that regulates embryonic cellularization, gastrulation and segmentation. The polypeptide is AF4/FMR2 family member lilli (Drosophila willistoni (Fruit fly)).